The following is a 519-amino-acid chain: Cysteine--tRNA ligase (519 aa).

Cys30 is a binding site for Zn(2+). The short motif at 32-42 is the 'HIGH' region element; sequence PTVYDRAHLGN. Zn(2+)-binding residues include Cys221, His253, and Glu257. The 'KMSKS' region signature appears at 286 to 290; the sequence is KMSKS. Position 289 (Lys289) interacts with ATP.

It belongs to the class-I aminoacyl-tRNA synthetase family. In terms of assembly, monomer. Zn(2+) is required as a cofactor.

Its subcellular location is the cytoplasm. The enzyme catalyses tRNA(Cys) + L-cysteine + ATP = L-cysteinyl-tRNA(Cys) + AMP + diphosphate. The chain is Cysteine--tRNA ligase from Cereibacter sphaeroides (strain KD131 / KCTC 12085) (Rhodobacter sphaeroides).